A 769-amino-acid chain; its full sequence is Integrin beta-8 (769 aa).

Positions 1–42 are cleaved as a signal peptide; the sequence is MCGSALAFFTAAFVCLQNDRRGPASFLWAAWVFSLVLGLGQG. Over 43–684 the chain is Extracellular; it reads EDNRCASSNA…ECFSSPSYLR (642 aa). A PSI domain is found at 46–95; that stretch reads RCASSNAASCARCLALGPECGWCVQEDFISGGSRSERCDIVSNLISKGCS. 25 cysteine pairs are disulfide-bonded: Cys-47–Cys-65, Cys-55–Cys-469, Cys-58–Cys-83, Cys-68–Cys-94, Cys-211–Cys-218, Cys-266–Cys-307, Cys-407–Cys-419, Cys-439–Cys-467, Cys-471–Cys-491, Cys-471–Cys-494, Cys-481–Cys-494, Cys-499–Cys-528, Cys-511–Cys-526, Cys-520–Cys-531, Cys-533–Cys-546, Cys-553–Cys-567, Cys-561–Cys-572, Cys-574–Cys-583, Cys-585–Cys-609, Cys-593–Cys-607, Cys-601–Cys-612, Cys-614–Cys-624, Cys-627–Cys-630, Cys-634–Cys-661, and Cys-640–Cys-657. The VWFA domain occupies 146–384; the sequence is PVDLYYLVDV…NLVVEAYQKL (239 aa). Mg(2+) is bound by residues Asp-154 and Ser-156. Ca(2+) is bound at residue Asp-193. An N-linked (GlcNAc...) asparagine glycan is attached at Asn-233. Ca(2+) contacts are provided by Asn-249, Asp-251, Pro-253, and Glu-254. Mg(2+) is bound at residue Glu-254. An N-linked (GlcNAc...) asparagine glycan is attached at Asn-402. N-linked (GlcNAc...) asparagine glycans are attached at residues Asn-421, Asn-431, Asn-456, and Asn-466. I-EGF domains follow at residues 471–495, 499–547, 548–584, and 585–625; these read CEDN…FQCD, CHFD…KYCE, KDDF…DRCQ, and CPSA…RFCE. An N-linked (GlcNAc...) asparagine glycan is attached at Asn-648. A helical membrane pass occupies residues 685–704; sequence IFFIIFIVTFLIGLLKVLII. Residues 705-769 are Cytoplasmic-facing; it reads RQVILQWNSN…NAHETFRCNF (65 aa).

It belongs to the integrin beta chain family. As to quaternary structure, heterodimer of an alpha and a beta subunit. Beta-8 (ITGB8) associates with alpha-V (ITGAV) to form ITGAV:ITGB8. ITGAV:ITGB8 interacts with TGFB1. As to expression, placenta, kidney, brain, ovary, uterus and in several transformed cells. Transiently expressed in 293 human embryonic kidney cells.

Its subcellular location is the cell membrane. Its function is as follows. Integrin alpha-V:beta-8 (ITGAV:ITGB8) is a receptor for fibronectin. It recognizes the sequence R-G-D in its ligands. Integrin alpha-V:beta-6 (ITGAV:ITGB6) mediates R-G-D-dependent release of transforming growth factor beta-1 (TGF-beta-1) from regulatory Latency-associated peptide (LAP), thereby playing a key role in TGF-beta-1 activation on the surface of activated regulatory T-cells (Tregs). Required during vasculogenesis. This Homo sapiens (Human) protein is Integrin beta-8.